Consider the following 266-residue polypeptide: Aspartate/glutamate leucyltransferase (266 aa).

The protein belongs to the R-transferase family. Bpt subfamily.

The protein localises to the cytoplasm. The enzyme catalyses N-terminal L-glutamyl-[protein] + L-leucyl-tRNA(Leu) = N-terminal L-leucyl-L-glutamyl-[protein] + tRNA(Leu) + H(+). The catalysed reaction is N-terminal L-aspartyl-[protein] + L-leucyl-tRNA(Leu) = N-terminal L-leucyl-L-aspartyl-[protein] + tRNA(Leu) + H(+). Its function is as follows. Functions in the N-end rule pathway of protein degradation where it conjugates Leu from its aminoacyl-tRNA to the N-termini of proteins containing an N-terminal aspartate or glutamate. This chain is Aspartate/glutamate leucyltransferase, found in Rhizorhabdus wittichii (strain DSM 6014 / CCUG 31198 / JCM 15750 / NBRC 105917 / EY 4224 / RW1) (Sphingomonas wittichii).